The sequence spans 254 residues: Ribosomal RNA small subunit methyltransferase J (254 aa).

S-adenosyl-L-methionine-binding positions include 107 to 108 (RD), 123 to 124 (ER), and aspartate 177.

It belongs to the methyltransferase superfamily. RsmJ family.

The protein resides in the cytoplasm. It catalyses the reaction guanosine(1516) in 16S rRNA + S-adenosyl-L-methionine = N(2)-methylguanosine(1516) in 16S rRNA + S-adenosyl-L-homocysteine + H(+). Specifically methylates the guanosine in position 1516 of 16S rRNA. The chain is Ribosomal RNA small subunit methyltransferase J from Histophilus somni (strain 2336) (Haemophilus somnus).